We begin with the raw amino-acid sequence, 426 residues long: Serine--tRNA ligase (426 aa).

An L-serine-binding site is contributed by 233–235 (TAE). Residue 264–266 (RSE) participates in ATP binding. Glu-287 serves as a coordination point for L-serine. 351-354 (EISS) lines the ATP pocket. Ser-387 lines the L-serine pocket.

Belongs to the class-II aminoacyl-tRNA synthetase family. Type-1 seryl-tRNA synthetase subfamily. In terms of assembly, homodimer. The tRNA molecule binds across the dimer.

It localises to the cytoplasm. The catalysed reaction is tRNA(Ser) + L-serine + ATP = L-seryl-tRNA(Ser) + AMP + diphosphate + H(+). It catalyses the reaction tRNA(Sec) + L-serine + ATP = L-seryl-tRNA(Sec) + AMP + diphosphate + H(+). The protein operates within aminoacyl-tRNA biosynthesis; selenocysteinyl-tRNA(Sec) biosynthesis; L-seryl-tRNA(Sec) from L-serine and tRNA(Sec): step 1/1. Its function is as follows. Catalyzes the attachment of serine to tRNA(Ser). Is also able to aminoacylate tRNA(Sec) with serine, to form the misacylated tRNA L-seryl-tRNA(Sec), which will be further converted into selenocysteinyl-tRNA(Sec). The sequence is that of Serine--tRNA ligase from Ectopseudomonas mendocina (strain ymp) (Pseudomonas mendocina).